Here is a 115-residue protein sequence, read N- to C-terminus: Replication initiation control protein YabA (115 aa).

Histidine 90, cysteine 92, cysteine 106, and cysteine 109 together coordinate Zn(2+).

This sequence belongs to the YabA family. Homotetramer. Interacts with both DnaA and DnaN, acting as a bridge between these two proteins. The cofactor is Zn(2+).

It is found in the cytoplasm. The protein localises to the nucleoid. In terms of biological role, involved in control of chromosome replication initiation. Inhibits the cooperative binding of DnaA to the oriC region, thus negatively regulating initiation of chromosome replication. Inhibits the ability of DnaA-ATP to form a helix on DNA; does not disassemble preformed DnaA-DNA helices. Decreases the residence time of DnaA on the chromosome at its binding sites (oriC, replication forks and promoter-binding sites). Tethers DnaA to the replication machinery via the DNA polymerase beta sliding clamp subunit (dnaN). Associates with oriC and other DnaA targets on the chromosome in a DnaA-dependent manner. This chain is Replication initiation control protein YabA, found in Staphylococcus aureus (strain bovine RF122 / ET3-1).